A 95-amino-acid chain; its full sequence is Protein FAM240C (95 aa).

The segment at 68-95 (KMLQGPGRCPDRVPEATESLHTKDKKAA) is disordered. Residues 76–95 (CPDRVPEATESLHTKDKKAA) show a composition bias toward basic and acidic residues.

This sequence belongs to the FAM240 family.

The protein is Protein FAM240C (FAM240C) of Homo sapiens (Human).